We begin with the raw amino-acid sequence, 82 residues long: Small ribosomal subunit protein bS16 (82 aa).

This sequence belongs to the bacterial ribosomal protein bS16 family.

The chain is Small ribosomal subunit protein bS16 from Francisella tularensis subsp. holarctica (strain FTNF002-00 / FTA).